The chain runs to 830 residues: Eisosome protein 1 (830 aa).

3 disordered regions span residues 1 to 29 (MSLV…SAGK), 128 to 156 (RSRT…KTPK), and 650 to 830 (GEFL…KEVF). Composition is skewed to low complexity over residues 128 to 148 (RSRT…SSSS) and 741 to 761 (TKTT…KPVT). Positions 810 to 830 (EGGKEEPTSKDNRKSLFKEVF) are enriched in basic and acidic residues.

It belongs to the EIS1 family.

It localises to the cytoplasmic granule. Its subcellular location is the cell membrane. Its function is as follows. Required for normal formation of eisosomes, large cytoplasmic protein assemblies that localize to specialized domains on plasma membrane and mark the site of endocytosis. The chain is Eisosome protein 1 (EIS1) from Kluyveromyces lactis (strain ATCC 8585 / CBS 2359 / DSM 70799 / NBRC 1267 / NRRL Y-1140 / WM37) (Yeast).